The chain runs to 453 residues: tRNA-2-methylthio-N(6)-dimethylallyladenosine synthase (453 aa).

Positions arginine 21–alanine 137 constitute an MTTase N-terminal domain. Residues cysteine 30, cysteine 66, cysteine 100, cysteine 174, cysteine 178, and cysteine 181 each contribute to the [4Fe-4S] cluster site. Residues arginine 160–glutamate 389 form the Radical SAM core domain. The 62-residue stretch at lysine 392–isoleucine 453 folds into the TRAM domain.

Belongs to the methylthiotransferase family. MiaB subfamily. Monomer. The cofactor is [4Fe-4S] cluster.

The protein localises to the cytoplasm. It carries out the reaction N(6)-dimethylallyladenosine(37) in tRNA + (sulfur carrier)-SH + AH2 + 2 S-adenosyl-L-methionine = 2-methylsulfanyl-N(6)-dimethylallyladenosine(37) in tRNA + (sulfur carrier)-H + 5'-deoxyadenosine + L-methionine + A + S-adenosyl-L-homocysteine + 2 H(+). Functionally, catalyzes the methylthiolation of N6-(dimethylallyl)adenosine (i(6)A), leading to the formation of 2-methylthio-N6-(dimethylallyl)adenosine (ms(2)i(6)A) at position 37 in tRNAs that read codons beginning with uridine. The chain is tRNA-2-methylthio-N(6)-dimethylallyladenosine synthase from Bdellovibrio bacteriovorus (strain ATCC 15356 / DSM 50701 / NCIMB 9529 / HD100).